The following is a 387-amino-acid chain: Alanine racemase (387 aa).

The active-site Proton acceptor; specific for D-alanine is the Lys-48. Lys-48 bears the N6-(pyridoxal phosphate)lysine mark. Arg-146 is a binding site for substrate. The active-site Proton acceptor; specific for L-alanine is the Tyr-267. Met-315 provides a ligand contact to substrate.

This sequence belongs to the alanine racemase family. Pyridoxal 5'-phosphate is required as a cofactor.

It catalyses the reaction L-alanine = D-alanine. It functions in the pathway amino-acid biosynthesis; D-alanine biosynthesis; D-alanine from L-alanine: step 1/1. Catalyzes the interconversion of L-alanine and D-alanine. May also act on other amino acids. The protein is Alanine racemase (alr) of Methylacidiphilum infernorum (isolate V4) (Methylokorus infernorum (strain V4)).